The sequence spans 839 residues: Eukaryotic translation initiation factor 3 subunit C (839 aa).

The interval 1 to 93 is disordered; it reads MSRFFVAGYN…DSDSEDEGRR (93 aa). Acidic residues-rich tracts occupy residues 14 to 27 and 34 to 58; these read SSEE…DEEL and GEQE…SDSD. The 175-residue stretch at 585–759 folds into the PCI domain; sequence FHQHINLELL…AFIQFASTEP (175 aa). The segment at 783–839 is disordered; that stretch reads EKTSSNGYGKKQPQQQQQQQQQQQQQQQQQKDLLQEDNSRFRYANVNTNNDEFQTTA. Positions 794-812 are enriched in low complexity; it reads QPQQQQQQQQQQQQQQQQQ. Residues 827–839 are compositionally biased toward polar residues; sequence NVNTNNDEFQTTA.

It belongs to the eIF-3 subunit C family. As to quaternary structure, component of the eukaryotic translation initiation factor 3 (eIF-3) complex.

It localises to the cytoplasm. Component of the eukaryotic translation initiation factor 3 (eIF-3) complex, which is involved in protein synthesis of a specialized repertoire of mRNAs and, together with other initiation factors, stimulates binding of mRNA and methionyl-tRNAi to the 40S ribosome. The eIF-3 complex specifically targets and initiates translation of a subset of mRNAs involved in cell proliferation. The sequence is that of Eukaryotic translation initiation factor 3 subunit C from Scheffersomyces stipitis (strain ATCC 58785 / CBS 6054 / NBRC 10063 / NRRL Y-11545) (Yeast).